The sequence spans 105 residues: Integration host factor subunit alpha (105 aa).

Belongs to the bacterial histone-like protein family. As to quaternary structure, heterodimer of an alpha and a beta chain.

In terms of biological role, this protein is one of the two subunits of integration host factor, a specific DNA-binding protein that functions in genetic recombination as well as in transcriptional and translational control. This is Integration host factor subunit alpha from Rhodospirillum rubrum (strain ATCC 11170 / ATH 1.1.1 / DSM 467 / LMG 4362 / NCIMB 8255 / S1).